Reading from the N-terminus, the 692-residue chain is DNA ligase (692 aa).

Over residues 1–14 the composition is skewed to polar residues; that stretch reads MQPDLFSTASQADA. Residues 1-27 are disordered; the sequence is MQPDLFSTASQADANATPEEPDASNPA. Residues 54-58, 103-104, and E134 each bind NAD(+); these read DAEYD and SL. The active-site N6-AMP-lysine intermediate is K136. The NAD(+) site is built by R157, E194, K311, and K335. Zn(2+)-binding residues include C429, C432, C447, and C454. The BRCT domain maps to 612 to 692; the sequence is NKPKPFAGKT…ALLQLLDTHE (81 aa).

It belongs to the NAD-dependent DNA ligase family. LigA subfamily. It depends on Mg(2+) as a cofactor. Mn(2+) serves as cofactor.

The catalysed reaction is NAD(+) + (deoxyribonucleotide)n-3'-hydroxyl + 5'-phospho-(deoxyribonucleotide)m = (deoxyribonucleotide)n+m + AMP + beta-nicotinamide D-nucleotide.. In terms of biological role, DNA ligase that catalyzes the formation of phosphodiester linkages between 5'-phosphoryl and 3'-hydroxyl groups in double-stranded DNA using NAD as a coenzyme and as the energy source for the reaction. It is essential for DNA replication and repair of damaged DNA. The protein is DNA ligase of Janthinobacterium sp. (strain Marseille) (Minibacterium massiliensis).